The primary structure comprises 379 residues: Alcohol dehydrogenase 3 (379 aa).

8 residues coordinate Zn(2+): Cys-47, Thr-49, His-69, Cys-99, Cys-102, Cys-105, Cys-113, and Cys-177. An alcohol contacts are provided by Thr-49 and His-69. Thr-49 contacts NAD(+). NAD(+)-binding positions include 202-207 (GLGAVG), Asp-226, Lys-231, Thr-272, Val-295, 295-297 (VGV), Phe-322, and Arg-372.

It belongs to the zinc-containing alcohol dehydrogenase family. As to quaternary structure, homodimer. Requires Zn(2+) as cofactor.

The protein localises to the cytoplasm. It catalyses the reaction a primary alcohol + NAD(+) = an aldehyde + NADH + H(+). It carries out the reaction a secondary alcohol + NAD(+) = a ketone + NADH + H(+). This Hordeum vulgare (Barley) protein is Alcohol dehydrogenase 3 (ADH3).